Reading from the N-terminus, the 191-residue chain is Large ribosomal subunit protein bL9 (191 aa).

The disordered stretch occupies residues 171 to 191; the sequence is EDALKPEDFFNPEAELESEEE.

The protein belongs to the bacterial ribosomal protein bL9 family.

Its function is as follows. Binds to the 23S rRNA. The chain is Large ribosomal subunit protein bL9 from Rhizobium meliloti (strain 1021) (Ensifer meliloti).